A 205-amino-acid polypeptide reads, in one-letter code: Lymphotoxin-alpha (205 aa).

The signal sequence occupies residues 1–34 (MTPPERLFLSRVRGTPLHLLLLGLLLVLLPGAQG). O-linked (GalNAc...) threonine glycosylation is present at T41. The 143-residue stretch at 63 to 205 (PAAHLIGDPS…STVFFGAFAL (143 aa)) folds into the THD domain. N96 carries N-linked (GlcNAc...) asparagine glycosylation.

The protein belongs to the tumor necrosis factor family. Homotrimer, and heterotrimer of either two LTB and one LTA subunits or (less prevalent) two LTA and one LTB subunits. Interacts with TNFRSF14.

Its subcellular location is the secreted. It is found in the membrane. In terms of biological role, cytokine that in its homotrimeric form binds to TNFRSF1A/TNFR1, TNFRSF1B/TNFBR and TNFRSF14/HVEM. In its heterotrimeric form with LTB binds to TNFRSF3/LTBR. Lymphotoxin is produced by lymphocytes and is cytotoxic for a wide range of tumor cells in vitro and in vivo. The polypeptide is Lymphotoxin-alpha (LTA) (Macaca mulatta (Rhesus macaque)).